A 448-amino-acid chain; its full sequence is Bud neck protein 5 (448 aa).

Disordered stretches follow at residues 63-103, 171-211, and 242-352; these read SGND…DPSQ, DDEW…TLGG, and GDNE…SSPI. Phosphoserine is present on residues S70 and S179. Residues 171-180 are compositionally biased toward acidic residues; the sequence is DDEWEDEKSD. The segment covering 181–191 has biased composition (basic and acidic residues); the sequence is VEEGRVDKGTE. Phosphoserine is present on S194. Over residues 245–262 the composition is skewed to basic and acidic residues; it reads EYNHESSRLADQTPHDDN. Residue T257 is modified to Phosphothreonine. Residues 264–281 show a composition bias toward polar residues; it reads ENCPNRSGGSTPLDSQTK. Phosphoserine is present on residues S270 and S273. T274 carries the phosphothreonine modification. Residues 325–343 show a composition bias toward low complexity; sequence SVSSNSNSRNGSRKSSLNK. Phosphoserine is present on residues S332 and S340. Y344 carries the post-translational modification Phosphotyrosine. S346 and S350 each carry phosphoserine.

As to quaternary structure, component of the GIN4 complex composed of at least BNI5, CDC3, CDC10, CDC11, CDC12, GIN4, NAP1 and SHS1. Interacts directly with CDC11, CDC12 and SHS1.

The protein resides in the cytoplasm. It localises to the bud neck. Functionally, required for normal septin function and cytokinesis. Its recruitment to the bud neck by CDCd11 and SHS1 ensures efficient localization at the bud neck of MYO1, the type II myosin of the actomyosin contractile ring. In Saccharomyces cerevisiae (strain ATCC 204508 / S288c) (Baker's yeast), this protein is Bud neck protein 5.